We begin with the raw amino-acid sequence, 520 residues long: Cytochrome P450 4F3 (520 aa).

Residues 11-31 traverse the membrane as a helical segment; it reads LWPMAASPWLLLLLVGASWLL. Positions 328 and 468 each coordinate heme.

This sequence belongs to the cytochrome P450 family. It depends on heme as a cofactor. As to expression, selectively expressed in blood neutrophils and bone marrow cells. Coexpressed with CYP4F3B in prostate, ileum and trachea. Selectively expressed in liver and kidney. It is also the predominant CYP4F isoform in trachea and tissues of the gastrointestinal tract.

It is found in the endoplasmic reticulum membrane. It localises to the microsome membrane. The enzyme catalyses an organic molecule + reduced [NADPH--hemoprotein reductase] + O2 = an alcohol + oxidized [NADPH--hemoprotein reductase] + H2O + H(+). It catalyses the reaction leukotriene B4 + reduced [NADPH--hemoprotein reductase] + O2 = 20-hydroxy-leukotriene B4 + oxidized [NADPH--hemoprotein reductase] + H2O + H(+). The catalysed reaction is 20-hydroxy-leukotriene B4 + reduced [NADPH--hemoprotein reductase] + O2 = 20-oxo-leukotriene B4 + oxidized [NADPH--hemoprotein reductase] + 2 H2O + H(+). It carries out the reaction 20-oxo-leukotriene B4 + reduced [NADPH--hemoprotein reductase] + O2 = 20-carboxy-leukotriene B4 + oxidized [NADPH--hemoprotein reductase] + H2O + 2 H(+). The enzyme catalyses (5Z,8Z,11Z)-eicosatrienoate + reduced [NADPH--hemoprotein reductase] + O2 = 20-hydroxy-(5Z,8Z,11Z)-eicosatrienoate + oxidized [NADPH--hemoprotein reductase] + H2O + H(+). It catalyses the reaction (5Z,8Z,11Z,14Z)-eicosatetraenoate + reduced [NADPH--hemoprotein reductase] + O2 = 20-hydroxy-(5Z,8Z,11Z,14Z)-eicosatetraenoate + oxidized [NADPH--hemoprotein reductase] + H2O + H(+). The catalysed reaction is (5Z,8Z,11Z,14Z,17Z)-eicosapentaenoate + reduced [NADPH--hemoprotein reductase] + O2 = 19-hydroxy-(5Z,8Z,11Z,14Z,17Z)-eicosapentaenoate + oxidized [NADPH--hemoprotein reductase] + H2O + H(+). It carries out the reaction (5Z,8Z,11Z,14Z,17Z)-eicosapentaenoate + reduced [NADPH--hemoprotein reductase] + O2 = 20-hydroxy-(5Z,8Z,11Z,14Z,17Z)-eicosapentaenoate + oxidized [NADPH--hemoprotein reductase] + H2O + H(+). The enzyme catalyses (4Z,7Z,10Z,13Z,16Z,19Z)-docosahexaenoate + reduced [NADPH--hemoprotein reductase] + O2 = 21-hydroxy-(4Z,7Z,10Z,13Z,16Z,19Z)-docosahexaenoate + oxidized [NADPH--hemoprotein reductase] + H2O + H(+). It catalyses the reaction (4Z,7Z,10Z,13Z,16Z,19Z)-docosahexaenoate + reduced [NADPH--hemoprotein reductase] + O2 = 22-hydroxy-(4Z,7Z,10Z,13Z,16Z,19Z)-docosahexaenoate + oxidized [NADPH--hemoprotein reductase] + H2O + H(+). The catalysed reaction is 8,9-epoxy-(5Z,11Z,14Z)-eicosatrienoate + reduced [NADPH--hemoprotein reductase] + O2 = 20-hydroxy-8,9-epoxy-(5Z,11Z,14Z)-eicosatrienoate + oxidized [NADPH--hemoprotein reductase] + H2O + H(+). It carries out the reaction 11,12-epoxy-(5Z,8Z,14Z)-eicosatrienoate + reduced [NADPH--hemoprotein reductase] + O2 = 20-hydroxy-11,12-epoxy-(5Z,8Z,14Z)-eicosatrienoate + oxidized [NADPH--hemoprotein reductase] + H2O + H(+). The enzyme catalyses 14,15-epoxy-(5Z,8Z,11Z)-eicosatrienoate + reduced [NADPH--hemoprotein reductase] + O2 = 20-hydroxy-14,15-epoxy-(5Z,8Z,11Z)-eicosatrienoate + oxidized [NADPH--hemoprotein reductase] + H2O + H(+). It catalyses the reaction 12,13-epoxy-(9Z)-octadecenoate + reduced [NADPH--hemoprotein reductase] + O2 = 18-hydroxy-12,13-epoxy-(9Z)-octadecenoate + oxidized [NADPH--hemoprotein reductase] + H2O + H(+). The catalysed reaction is 9,10-epoxy-(12Z)-octadecenoate + reduced [NADPH--hemoprotein reductase] + O2 = 18-hydroxy-9,10-epoxy-(12Z)-octadecenoate + oxidized [NADPH--hemoprotein reductase] + H2O + H(+). It carries out the reaction 9,10-epoxyoctadecanoate + reduced [NADPH--hemoprotein reductase] + O2 = 18-hydroxy-9,10-epoxy-octadecanoate + oxidized [NADPH--hemoprotein reductase] + H2O + H(+). The enzyme catalyses (12R)-hydroxy-(9Z)-octadecenoate + reduced [NADPH--hemoprotein reductase] + O2 = (12R),18-dihydroxy-(9Z)-octadecenoate + oxidized [NADPH--hemoprotein reductase] + H2O + H(+). It catalyses the reaction 12-hydroxyoctadecanoate + reduced [NADPH--hemoprotein reductase] + O2 = 12,18-dihydroxyoctadecanoate + oxidized [NADPH--hemoprotein reductase] + H2O + H(+). The catalysed reaction is 5-hydroxy-(6E,8Z,11Z,14Z)-eicosatetraenoate + reduced [NADPH--hemoprotein reductase] + O2 = 5,20-dihydroxy-(6E,8Z,11Z,14Z)-eicosatetraenoate + oxidized [NADPH--hemoprotein reductase] + H2O + H(+). It carries out the reaction 8-hydroxy-(5Z,9E,11Z,14Z)-eicosatetraenoate + reduced [NADPH--hemoprotein reductase] + O2 = 8,20-dihydroxy-(5Z,9E,11Z,14Z)-eicosatetraenoate + oxidized [NADPH--hemoprotein reductase] + H2O + H(+). The enzyme catalyses 12-hydroxy-(5Z,8Z,10E,14Z)-eicosatetraenoate + reduced [NADPH--hemoprotein reductase] + O2 = 12,20-dihydroxy-(5Z,8Z,10E,14Z)-eicosatetraenoate + oxidized [NADPH--hemoprotein reductase] + H2O + H(+). It catalyses the reaction 5-hydroxy-(6E,8Z,11Z,14Z,17Z)-eicosapentaenoate + reduced [NADPH--hemoprotein reductase] + O2 = 5,20-dihydroxy-(6E,8Z,11Z,14Z,17Z)-eicosapentaenoate + oxidized [NADPH--hemoprotein reductase] + H2O + H(+). The catalysed reaction is lipoxin A4 + reduced [NADPH--hemoprotein reductase] + O2 = 20-hydroxy-lipoxin A4 + oxidized [NADPH--hemoprotein reductase] + H2O + H(+). It carries out the reaction lipoxin B4 + reduced [NADPH--hemoprotein reductase] + O2 = 20-hydroxy-lipoxin B4 + oxidized [NADPH--hemoprotein reductase] + H2O + H(+). The enzyme catalyses 22-hydroxydocosanoate + reduced [NADPH--hemoprotein reductase] + O2 = 22-oxodocosanoate + oxidized [NADPH--hemoprotein reductase] + 2 H2O + H(+). It catalyses the reaction 22-oxodocosanoate + reduced [NADPH--hemoprotein reductase] + O2 = docosanedioate + oxidized [NADPH--hemoprotein reductase] + H2O + 2 H(+). The catalysed reaction is docosanoate + reduced [NADPH--hemoprotein reductase] + O2 = 22-hydroxydocosanoate + oxidized [NADPH--hemoprotein reductase] + H2O + H(+). It carries out the reaction tetracosanoate + reduced [NADPH--hemoprotein reductase] + O2 = 24-hydroxytetracosanoate + oxidized [NADPH--hemoprotein reductase] + H2O + H(+). The enzyme catalyses hexacosanoate + reduced [NADPH--hemoprotein reductase] + O2 = 26-hydroxyhexacosanoate + oxidized [NADPH--hemoprotein reductase] + H2O + H(+). It catalyses the reaction 26-hydroxyhexacosanoate + reduced [NADPH--hemoprotein reductase] + O2 = 26-oxohexacosanoate + oxidized [NADPH--hemoprotein reductase] + 2 H2O + H(+). The catalysed reaction is 26-oxohexacosanoate + reduced [NADPH--hemoprotein reductase] + O2 = hexacosanedioate + oxidized [NADPH--hemoprotein reductase] + H2O + 2 H(+). It carries out the reaction 3-hydroxyoctadecanoate + reduced [NADPH--hemoprotein reductase] + O2 = 3,18-dihydroxyoctadecanoate + oxidized [NADPH--hemoprotein reductase] + H2O + H(+). The enzyme catalyses 3-hydroxyhexadecanoate + reduced [NADPH--hemoprotein reductase] + O2 = 3,16-dihydroxyhexadecanoate + oxidized [NADPH--hemoprotein reductase] + H2O + H(+). Its pathway is lipid metabolism; leukotriene B4 degradation. The protein operates within lipid metabolism; arachidonate metabolism. Its activity is regulated as follows. Inhibited by carbon monoxide (CO). Its function is as follows. A cytochrome P450 monooxygenase involved in the metabolism of various endogenous substrates, including fatty acids and their oxygenated derivatives (oxylipins). Mechanistically, uses molecular oxygen inserting one oxygen atom into a substrate, and reducing the second into a water molecule, with two electrons provided by NADPH via cytochrome P450 reductase (CPR; NADPH-ferrihemoprotein reductase). May play a role in inactivation of pro-inflammatory and anti-inflammatory oxylipins during the resolution of inflammation. Functionally, catalyzes predominantly the oxidation of the terminal carbon (omega-oxidation) of oxylipins in myeloid cells, displaying higher affinity for arachidonate metabolite leukotriene B4 (LTB4). Inactivates LTB4 via three successive oxidative transformations to 20-hydroxy-LTB4, then to 20-oxo-LTB4 and to 20-carboxy-LTB4. Has omega-hydroxylase activity toward long-chain fatty acid epoxides with preference for 8,9-epoxy-(5Z,11Z,14Z)-eicosatrienoate (EET) and 9,10-epoxyoctadecanoate. Omega-hydroxylates monohydroxy polyunsaturated fatty acids (PUFAs), including hydroxyeicosatetraenoates (HETEs) and hydroxyeicosapentaenoates (HEPEs), to dihydroxy compounds. Contributes to the degradation of saturated very long-chain fatty acids (VLCFAs) such as docosanoic acid, by catalyzing successive omega-oxidations to the corresponding dicarboxylic acid, thereby initiating chain shortening. Has low hydroxylase activity toward PUFAs. In terms of biological role, catalyzes predominantly the oxidation of the terminal carbon (omega-oxidation) of polyunsaturated fatty acids (PUFAs). Participates in the conversion of arachidonic acid to 20-hydroxyeicosatetraenoic acid (20-HETE), a signaling molecule acting both as vasoconstrictive and natriuretic with overall effect on arterial blood pressure. Has high omega-hydroxylase activity toward other PUFAs, including eicosatrienoic acid (ETA), eicosapentaenoic acid (EPA) and docosahexaenoic acid (DHA). Can also catalyze the oxidation of the penultimate carbon (omega-1 oxidation) of PUFAs with lower efficiency. Contributes to the degradation of saturated very long-chain fatty acids (VLCFAs) such as docosanoic acid and hexacosanoic acid, by catalyzing successive omega-oxidations to the corresponding dicarboxylic acids, thereby initiating chain shortening. Omega-hydroxylates long-chain 3-hydroxy fatty acids, likely initiating the oxidative conversion to the corresponding 3-hydroxydicarboxylic fatty acids. Has omega-hydroxylase activity toward long-chain fatty acid epoxides with preference for 8,9-epoxy-(5Z,11Z,14Z)-eicosatrienoate (EET) and 9,10-epoxyoctadecanoate. This is Cytochrome P450 4F3 from Homo sapiens (Human).